The chain runs to 723 residues: Malate synthase G (723 aa).

Residues valine 118, 125–126 (RY), serine 274, and arginine 311 contribute to the acetyl-CoA site. Arginine 338 functions as the Proton acceptor in the catalytic mechanism. Glyoxylate is bound by residues arginine 338, glutamate 427, and 452 to 455 (GFLD). Mg(2+)-binding residues include glutamate 427 and aspartate 455. Position 536 (proline 536) interacts with acetyl-CoA. Cysteine 617 bears the Cysteine sulfenic acid (-SOH) mark. The Proton donor role is filled by aspartate 631. Cysteine 688 is modified (cysteine sulfenic acid (-SOH)).

The protein belongs to the malate synthase family. GlcB subfamily. As to quaternary structure, monomer. Requires Mg(2+) as cofactor.

The protein resides in the cytoplasm. It carries out the reaction glyoxylate + acetyl-CoA + H2O = (S)-malate + CoA + H(+). It functions in the pathway carbohydrate metabolism; glyoxylate cycle; (S)-malate from isocitrate: step 2/2. Its function is as follows. Involved in the glycolate utilization. Catalyzes the condensation and subsequent hydrolysis of acetyl-coenzyme A (acetyl-CoA) and glyoxylate to form malate and CoA. This Shigella flexneri protein is Malate synthase G.